Here is a 204-residue protein sequence, read N- to C-terminus: LexA repressor (204 aa).

The H-T-H motif DNA-binding region spans 28-48 (RAEIAQELGFKSPNAAEEHLK). Residues S125 and K162 each act as for autocatalytic cleavage activity in the active site.

It belongs to the peptidase S24 family. As to quaternary structure, homodimer.

The enzyme catalyses Hydrolysis of Ala-|-Gly bond in repressor LexA.. Functionally, represses a number of genes involved in the response to DNA damage (SOS response), including recA and lexA. In the presence of single-stranded DNA, RecA interacts with LexA causing an autocatalytic cleavage which disrupts the DNA-binding part of LexA, leading to derepression of the SOS regulon and eventually DNA repair. This chain is LexA repressor, found in Pseudomonas aeruginosa (strain LESB58).